Consider the following 151-residue polypeptide: Transcriptional repressor NrdR (151 aa).

The segment at 3-34 (CPFCSSDNTRVIDSRPADDNSSIRRRRLCDDC) is a zinc-finger region. The 91-residue stretch at 49–139 (LIVIKKDNNR…VYREFKDVNT (91 aa)) folds into the ATP-cone domain.

This sequence belongs to the NrdR family. It depends on Zn(2+) as a cofactor.

In terms of biological role, negatively regulates transcription of bacterial ribonucleotide reductase nrd genes and operons by binding to NrdR-boxes. The protein is Transcriptional repressor NrdR of Agathobacter rectalis (strain ATCC 33656 / DSM 3377 / JCM 17463 / KCTC 5835 / VPI 0990) (Eubacterium rectale).